The chain runs to 208 residues: Large ribosomal subunit protein uL3 (208 aa).

Residues N126–P150 form a disordered region.

Belongs to the universal ribosomal protein uL3 family. In terms of assembly, part of the 50S ribosomal subunit. Forms a cluster with proteins L14 and L19.

In terms of biological role, one of the primary rRNA binding proteins, it binds directly near the 3'-end of the 23S rRNA, where it nucleates assembly of the 50S subunit. The polypeptide is Large ribosomal subunit protein uL3 (Exiguobacterium sibiricum (strain DSM 17290 / CCUG 55495 / CIP 109462 / JCM 13490 / 255-15)).